The chain runs to 236 residues: Apoptosis regulator Bcl-2 (236 aa).

A BH4 motif is present at residues 10–30 (DNREIVMKYIHYKLSQRGYEW). Phosphothreonine; by MAPK8 is present on Thr69. Phosphoserine; by MAPK8 and PKC is present on Ser70. The residue at position 84 (Ser84) is a Phosphoserine; by MAPK8. Positions 90–104 (VHLTLRRAGDDFSRR) match the BH3 motif. Positions 133-152 (ELFRDGVNWGRIVAFFEFGG) match the BH1 motif. Residues 184 to 199 (TWIQDNGGWDAFVELY) carry the BH2 motif. A helical membrane pass occupies residues 209 to 230 (FSWLSLKALLSLALVGACITLG).

Belongs to the Bcl-2 family. As to quaternary structure, forms homodimers, and heterodimers with BAX, BAD, BAK and Bcl-X(L). Heterodimerization with BAX requires intact BH1 and BH2 motifs, and is necessary for anti-apoptotic activity. Component of the complex, at least composed of LRPPRC, BECN1 and BCL2; the interactions prevent BECN1 from forming an autophagy-inducing complex with PIK3C3. Interacts with EI24. Also interacts with APAF1, BBC3, BCL2L1, BNIPL, MRPL41 and TP53BP2. Binding to FKBP8 seems to target BCL2 to the mitochondria and probably interferes with the binding of BCL2 to its targets. Interacts with BAG1 in an ATP-dependent manner. Interacts with RAF1 (the 'Ser-338' and 'Ser-339' phosphorylated form). Interacts (via the BH4 domain) with EGLN3; the interaction prevents the formation of the BAX-BCL2 complex and inhibits the anti-apoptotic activity of BCL2. Interacts with G0S2; this interaction also prevents the formation of the anti-apoptotic BAX-BCL2 complex. Interacts with RTL10/BOP. Interacts with the SCF(FBXO10) complex. Interacts (via the loop between motifs BH4 and BH3) with NLRP1 (via LRR repeats), but not with NLRP2, NLRP3, NLRP4, PYCARD, nor MEFV. Interacts with GIMAP3/IAN4, GIMAP4/IAN1 and GIMAP5/IAN5. Interacts with BCAP31. Interacts with IRF3; the interaction is inhibited by Sendai virus infection. Interacts with BECN1; thereby inhibiting autophagy in non-starvation conditions. Interacts with AMBRA1; thereby inhibiting autophagy. In terms of processing, phosphorylation/dephosphorylation on Ser-70 regulates anti-apoptotic activity. Growth factor-stimulated phosphorylation on Ser-70 by PKC is required for the anti-apoptosis activity and occurs during the G2/M phase of the cell cycle. In the absence of growth factors, BCL2 appears to be phosphorylated by other protein kinases such as ERKs and stress-activated kinases. Phosphorylated by MAPK8/JNK1 at Thr-69, Ser-70 and Ser-84, which stimulates starvation-induced autophagy. Dephosphorylated by protein phosphatase 2A (PP2A). Post-translationally, proteolytically cleaved by caspases during apoptosis. The cleaved protein, lacking the BH4 motif, has pro-apoptotic activity, causes the release of cytochrome c into the cytosol promoting further caspase activity. Monoubiquitinated by PRKN, leading to an increase in its stability. Ubiquitinated by SCF(FBXO10), leading to its degradation by the proteasome.

Its subcellular location is the mitochondrion outer membrane. The protein localises to the nucleus membrane. It is found in the endoplasmic reticulum membrane. It localises to the cytoplasm. Functionally, suppresses apoptosis in a variety of cell systems including factor-dependent lymphohematopoietic and neural cells. Regulates cell death by controlling the mitochondrial membrane permeability. Appears to function in a feedback loop system with caspases. Inhibits caspase activity either by preventing the release of cytochrome c from the mitochondria and/or by binding to the apoptosis-activating factor (APAF-1). Also acts as an inhibitor of autophagy: interacts with BECN1 and AMBRA1 during non-starvation conditions and inhibits their autophagy function. May attenuate inflammation by impairing NLRP1-inflammasome activation, hence CASP1 activation and IL1B release. The protein is Apoptosis regulator Bcl-2 (BCL2) of Canis lupus familiaris (Dog).